A 450-amino-acid polypeptide reads, in one-letter code: Tubulin alpha chain (450 aa).

Glutamine 11 contributes to the GTP binding site. An N6-acetyllysine modification is found at lysine 40. 7 residues coordinate GTP: glutamate 71, serine 140, glycine 144, threonine 145, threonine 179, asparagine 206, and asparagine 228. Residue glutamate 71 coordinates Mg(2+). Residue glutamate 254 is part of the active site.

The protein belongs to the tubulin family. Dimer of alpha and beta chains. A typical microtubule is a hollow water-filled tube with an outer diameter of 25 nm and an inner diameter of 15 nM. Alpha-beta heterodimers associate head-to-tail to form protofilaments running lengthwise along the microtubule wall with the beta-tubulin subunit facing the microtubule plus end conferring a structural polarity. Microtubules usually have 13 protofilaments but different protofilament numbers can be found in some organisms and specialized cells. Mg(2+) is required as a cofactor. Acetylation of alpha chains at Lys-40 stabilizes microtubules and affects affinity and processivity of microtubule motors. This modification has a role in multiple cellular functions, ranging from cell motility, cell cycle progression or cell differentiation to intracellular trafficking and signaling.

The protein localises to the cytoplasm. It localises to the cytoskeleton. It catalyses the reaction GTP + H2O = GDP + phosphate + H(+). Its function is as follows. Tubulin is the major constituent of microtubules, a cylinder consisting of laterally associated linear protofilaments composed of alpha- and beta-tubulin heterodimers. Microtubules grow by the addition of GTP-tubulin dimers to the microtubule end, where a stabilizing cap forms. Below the cap, tubulin dimers are in GDP-bound state, owing to GTPase activity of alpha-tubulin. This is Tubulin alpha chain from Euplotes vannus (Marine ciliate).